A 176-amino-acid chain; its full sequence is Peptide deformylase (176 aa).

Fe cation-binding residues include cysteine 92 and histidine 134. Residue glutamate 135 is part of the active site. Residue histidine 138 participates in Fe cation binding.

This sequence belongs to the polypeptide deformylase family. Requires Fe(2+) as cofactor.

The catalysed reaction is N-terminal N-formyl-L-methionyl-[peptide] + H2O = N-terminal L-methionyl-[peptide] + formate. In terms of biological role, removes the formyl group from the N-terminal Met of newly synthesized proteins. Requires at least a dipeptide for an efficient rate of reaction. N-terminal L-methionine is a prerequisite for activity but the enzyme has broad specificity at other positions. The chain is Peptide deformylase from Acinetobacter baumannii (strain SDF).